The primary structure comprises 58 residues: Galectin-1 (58 aa).

Positions 2–58 (GITXTSLHVAPGARLAVKGDIPAGAKSWVINLGKGENDIMLHFNARFDAHGDIRTIV) constitute a Galectin domain. Residues 43–47 (HFNAR) and H51 contribute to the a beta-D-galactoside site.

In terms of assembly, monomer. In terms of tissue distribution, detected in most tissues, most abundantly in skin.

Its subcellular location is the secreted. The protein localises to the extracellular space. The protein resides in the extracellular matrix. In terms of biological role, may regulate cell apoptosis and cell differentiation. Binds beta-galactoside and a wide array of complex carbohydrates. This is Galectin-1 from Podarcis hispanicus (Iberian wall lizard).